We begin with the raw amino-acid sequence, 466 residues long: Cysteine--tRNA ligase (466 aa).

C29 is a binding site for Zn(2+). The short motif at 31-41 is the 'HIGH' region element; sequence PTVYNYIHIGN. Zn(2+)-binding residues include C209, H234, and E238. Positions 266–270 match the 'KMSKS' region motif; it reads KMSKS. Position 269 (K269) interacts with ATP. S270 is subject to Phosphoserine.

The protein belongs to the class-I aminoacyl-tRNA synthetase family. As to quaternary structure, monomer. Zn(2+) is required as a cofactor.

The protein localises to the cytoplasm. It catalyses the reaction tRNA(Cys) + L-cysteine + ATP = L-cysteinyl-tRNA(Cys) + AMP + diphosphate. The sequence is that of Cysteine--tRNA ligase from Bacillus pumilus (strain SAFR-032).